A 63-amino-acid polypeptide reads, in one-letter code: Large ribosomal subunit protein uL29 (63 aa).

It belongs to the universal ribosomal protein uL29 family.

The polypeptide is Large ribosomal subunit protein uL29 (Pseudomonas fluorescens (strain ATCC BAA-477 / NRRL B-23932 / Pf-5)).